The chain runs to 366 residues: Methyltransferase phm5 (366 aa).

Residues 204 to 205, Asp230, 255 to 256, Arg273, and Arg274 contribute to the S-adenosyl-L-methionine site; these read GG and SM.

The protein belongs to the class I-like SAM-binding methyltransferase superfamily. Cation-independent O-methyltransferase family.

It participates in secondary metabolite biosynthesis. Methyltransferase; part of the gene cluster that mediates the biosynthesis of the trans-fused decalin-containing tetramic acid phomasetin, the stereochemical opposite of the HIV-1 integrase inhibitor equisetin. The PKS module of phm1 together with the enoylreductase phm4 catalyze the formation of the polyketide unit which is then conjugated to L-serine by the condensation domain of the phm1 NRPS module. Activity of the Dieckmann cyclase domain (RED) of phm1 results in release of the Dieckmann product intermediate. The Diels-Alderase phm7 then uses the Dieckmann product of phm1 as substrate and catalyzes the Diels-Alder cycloaddition to form the decalin ring of N-desmethylphomasetin. N-desmethylphomasetin is further methylated to phomasetin by the methyltransferase phm5. This chain is Methyltransferase phm5, found in Pyrenochaetopsis sp.